Reading from the N-terminus, the 701-residue chain is Glycine--tRNA ligase beta subunit (701 aa).

This sequence belongs to the class-II aminoacyl-tRNA synthetase family. In terms of assembly, tetramer of two alpha and two beta subunits.

It is found in the cytoplasm. The enzyme catalyses tRNA(Gly) + glycine + ATP = glycyl-tRNA(Gly) + AMP + diphosphate. In Anaeromyxobacter dehalogenans (strain 2CP-1 / ATCC BAA-258), this protein is Glycine--tRNA ligase beta subunit.